Consider the following 277-residue polypeptide: 2,3,4,5-tetrahydropyridine-2,6-dicarboxylate N-succinyltransferase (277 aa).

Substrate contacts are provided by Arg-106 and Asp-143.

This sequence belongs to the transferase hexapeptide repeat family. In terms of assembly, homotrimer.

It is found in the cytoplasm. The catalysed reaction is (S)-2,3,4,5-tetrahydrodipicolinate + succinyl-CoA + H2O = (S)-2-succinylamino-6-oxoheptanedioate + CoA. It functions in the pathway amino-acid biosynthesis; L-lysine biosynthesis via DAP pathway; LL-2,6-diaminopimelate from (S)-tetrahydrodipicolinate (succinylase route): step 1/3. In Xylella fastidiosa (strain Temecula1 / ATCC 700964), this protein is 2,3,4,5-tetrahydropyridine-2,6-dicarboxylate N-succinyltransferase.